The following is a 93-amino-acid chain: UPF0223 protein gbs1030 (93 aa).

It belongs to the UPF0223 family.

This is UPF0223 protein gbs1030 from Streptococcus agalactiae serotype III (strain NEM316).